A 571-amino-acid polypeptide reads, in one-letter code: Glutamate--tRNA ligase (571 aa).

A 'HIGH' region motif is present at residues 114–124 (PNPNGPWHVGH). The tract at residues 431-453 (KPLAGGPESASPPLHPNDEDRGR) is disordered.

This sequence belongs to the class-I aminoacyl-tRNA synthetase family. Glutamate--tRNA ligase type 2 subfamily.

Its subcellular location is the cytoplasm. The enzyme catalyses tRNA(Glu) + L-glutamate + ATP = L-glutamyl-tRNA(Glu) + AMP + diphosphate. Functionally, catalyzes the attachment of glutamate to tRNA(Glu) in a two-step reaction: glutamate is first activated by ATP to form Glu-AMP and then transferred to the acceptor end of tRNA(Glu). In Natronomonas pharaonis (strain ATCC 35678 / DSM 2160 / CIP 103997 / JCM 8858 / NBRC 14720 / NCIMB 2260 / Gabara) (Halobacterium pharaonis), this protein is Glutamate--tRNA ligase.